The following is a 76-amino-acid chain: Acyl carrier protein (76 aa).

In terms of domain architecture, Carrier spans 1–76; that stretch reads MATFDDVKDV…AAVDYIDNNQ (76 aa). Position 36 is an O-(pantetheine 4'-phosphoryl)serine (Ser-36).

It belongs to the acyl carrier protein (ACP) family. Post-translationally, 4'-phosphopantetheine is transferred from CoA to a specific serine of apo-ACP by AcpS. This modification is essential for activity because fatty acids are bound in thioester linkage to the sulfhydryl of the prosthetic group.

The protein resides in the cytoplasm. It functions in the pathway lipid metabolism; fatty acid biosynthesis. Functionally, carrier of the growing fatty acid chain in fatty acid biosynthesis. The chain is Acyl carrier protein from Deinococcus radiodurans (strain ATCC 13939 / DSM 20539 / JCM 16871 / CCUG 27074 / LMG 4051 / NBRC 15346 / NCIMB 9279 / VKM B-1422 / R1).